The chain runs to 467 residues: Glutamate--tRNA ligase (467 aa).

The 'HIGH' region signature appears at 9 to 19; sequence PSPTGFLHIGG. Positions 250–254 match the 'KMSKS' region motif; sequence KLSKR. K253 provides a ligand contact to ATP.

The protein belongs to the class-I aminoacyl-tRNA synthetase family. Glutamate--tRNA ligase type 1 subfamily. In terms of assembly, monomer.

The protein localises to the cytoplasm. The enzyme catalyses tRNA(Glu) + L-glutamate + ATP = L-glutamyl-tRNA(Glu) + AMP + diphosphate. Functionally, catalyzes the attachment of glutamate to tRNA(Glu) in a two-step reaction: glutamate is first activated by ATP to form Glu-AMP and then transferred to the acceptor end of tRNA(Glu). This Mesomycoplasma hyopneumoniae (strain 7448) (Mycoplasma hyopneumoniae) protein is Glutamate--tRNA ligase.